The primary structure comprises 338 residues: MGAMTASPGRRVLLAAPRGYCAGVDRAVIAVEKALEQYGAPVYVRHEIVHNKYVVQTLEKKGAIFVERTEEVPEGNIVMFSAHGVAPVVHEEAERGKLATIDATCPLVTKVHKEAVRFANDDYDILLIGHEGHEEVIGTSGEAPDHIQLVDGPEDVAKVEVRDPSKVVWLSQTTLSVDETMETVDALKDKFPQLISPPSDDICYATQNRQLAVKQMGAEAELVIVVGSRNSSNSKRLVEVAKQAGSRAAYLVDFADEIDETWLDGVTTVGVTSGASVPDVLVEQVLEWLSRRGFEDVEIVKAAEESIIFSLPKELRRDLREEAASLVAERGGSGTAGA.

A [4Fe-4S] cluster-binding site is contributed by Cys-21. Residues His-50 and His-83 each contribute to the (2E)-4-hydroxy-3-methylbut-2-enyl diphosphate site. Dimethylallyl diphosphate contacts are provided by His-50 and His-83. Positions 50 and 83 each coordinate isopentenyl diphosphate. Cys-105 contributes to the [4Fe-4S] cluster binding site. His-133 is a binding site for (2E)-4-hydroxy-3-methylbut-2-enyl diphosphate. Residue His-133 participates in dimethylallyl diphosphate binding. His-133 is an isopentenyl diphosphate binding site. Catalysis depends on Glu-135, which acts as the Proton donor. Residue Thr-173 participates in (2E)-4-hydroxy-3-methylbut-2-enyl diphosphate binding. Position 203 (Cys-203) interacts with [4Fe-4S] cluster. The (2E)-4-hydroxy-3-methylbut-2-enyl diphosphate site is built by Ser-231, Ser-232, Asn-233, and Ser-276. Dimethylallyl diphosphate contacts are provided by Ser-231, Ser-232, Asn-233, and Ser-276. The isopentenyl diphosphate site is built by Ser-231, Ser-232, Asn-233, and Ser-276.

Belongs to the IspH family. [4Fe-4S] cluster is required as a cofactor.

It carries out the reaction isopentenyl diphosphate + 2 oxidized [2Fe-2S]-[ferredoxin] + H2O = (2E)-4-hydroxy-3-methylbut-2-enyl diphosphate + 2 reduced [2Fe-2S]-[ferredoxin] + 2 H(+). The enzyme catalyses dimethylallyl diphosphate + 2 oxidized [2Fe-2S]-[ferredoxin] + H2O = (2E)-4-hydroxy-3-methylbut-2-enyl diphosphate + 2 reduced [2Fe-2S]-[ferredoxin] + 2 H(+). It functions in the pathway isoprenoid biosynthesis; dimethylallyl diphosphate biosynthesis; dimethylallyl diphosphate from (2E)-4-hydroxy-3-methylbutenyl diphosphate: step 1/1. The protein operates within isoprenoid biosynthesis; isopentenyl diphosphate biosynthesis via DXP pathway; isopentenyl diphosphate from 1-deoxy-D-xylulose 5-phosphate: step 6/6. In terms of biological role, catalyzes the conversion of 1-hydroxy-2-methyl-2-(E)-butenyl 4-diphosphate (HMBPP) into a mixture of isopentenyl diphosphate (IPP) and dimethylallyl diphosphate (DMAPP). Acts in the terminal step of the DOXP/MEP pathway for isoprenoid precursor biosynthesis. The polypeptide is 4-hydroxy-3-methylbut-2-enyl diphosphate reductase (Streptomyces coelicolor (strain ATCC BAA-471 / A3(2) / M145)).